The primary structure comprises 642 residues: Arginine--tRNA ligase, chloroplastic/mitochondrial (642 aa).

Residues 1-53 (MFIFPKDENRRETLTTKLRFSADHLTFTTVTEKLRATAWRFAFSSRAKSVVAM) constitute a chloroplast and mitochondrion transit peptide. Ala-54 carries the post-translational modification N-acetylalanine. The 'HIGH' region signature appears at 190-201 (PNIAKEMHVGHL).

Belongs to the class-I aminoacyl-tRNA synthetase family.

It localises to the plastid. Its subcellular location is the chloroplast. The protein localises to the mitochondrion. The enzyme catalyses tRNA(Arg) + L-arginine + ATP = L-arginyl-tRNA(Arg) + AMP + diphosphate. Forms part of a macromolecular complex that catalyzes the attachment of specific amino acids to cognate tRNAs during protein synthesis. The chain is Arginine--tRNA ligase, chloroplastic/mitochondrial from Arabidopsis thaliana (Mouse-ear cress).